The chain runs to 968 residues: RNA polymerase-associated protein RapA (968 aa).

Residues 164 to 334 form the Helicase ATP-binding domain; the sequence is DVGRRHAPRV…FARLRLLDPS (171 aa). Position 177 to 184 (177 to 184) interacts with ATP; it reads DEVGLGKT. The DEAH box signature appears at 280 to 283; that stretch reads DEAH. The Helicase C-terminal domain maps to 490 to 644; that stretch reads RVEWLMGHLT…TCPTGRAIYD (155 aa).

This sequence belongs to the SNF2/RAD54 helicase family. RapA subfamily. In terms of assembly, interacts with the RNAP. Has a higher affinity for the core RNAP than for the holoenzyme. Its ATPase activity is stimulated by binding to RNAP.

In terms of biological role, transcription regulator that activates transcription by stimulating RNA polymerase (RNAP) recycling in case of stress conditions such as supercoiled DNA or high salt concentrations. Probably acts by releasing the RNAP, when it is trapped or immobilized on tightly supercoiled DNA. Does not activate transcription on linear DNA. Probably not involved in DNA repair. The protein is RNA polymerase-associated protein RapA of Citrobacter koseri (strain ATCC BAA-895 / CDC 4225-83 / SGSC4696).